The chain runs to 115 residues: Alpha-endosulfine (115 aa).

Polar residues predominate over residues 1-10 (MSSENLSDTQ). The interval 1 to 27 (MSSENLSDTQMEYEDEKQDSQEKNANL) is disordered. Ser-65 is subject to Phosphoserine; by GWL. A disordered region spans residues 77 to 115 (NKQLPVAGPDKNLVTGDHIPTPQDLPQRRSSLVTSKLAG). Residues 104–115 (RRSSLVTSKLAG) show a composition bias toward polar residues.

It belongs to the endosulfine family. Phosphorylation at Ser-65 by gwl during mitosis is essential for interaction with ppp2r2d (PR55-delta) and subsequent inactivation of PP2A.

Its subcellular location is the cytoplasm. Functionally, protein phosphatase inhibitor that specifically inhibits protein phosphatase 2A (PP2A) during mitosis. When phosphorylated at Ser-67 during mitosis, specifically interacts with ppp2r2d (PR55-delta) and inhibits its activity, leading to inactivation of PP2A, an essential condition to keep cyclin-B1-CDK1 activity high during M phase. The protein is Alpha-endosulfine (ensa) of Salmo salar (Atlantic salmon).